The chain runs to 341 residues: Glyceraldehyde-3-phosphate dehydrogenase 2 (341 aa).

Residues 13–14, Asp-35, and Arg-85 each bind NAD(+); that span reads RI. D-glyceraldehyde 3-phosphate is bound by residues 157-159, Thr-188, 217-218, and Arg-240; these read SCT and TG. The active-site Nucleophile is the Cys-158. Residue Asn-322 participates in NAD(+) binding.

Belongs to the glyceraldehyde-3-phosphate dehydrogenase family. In terms of assembly, homotetramer.

The protein localises to the cytoplasm. It carries out the reaction D-glyceraldehyde 3-phosphate + phosphate + NAD(+) = (2R)-3-phospho-glyceroyl phosphate + NADH + H(+). It participates in carbohydrate degradation; glycolysis; pyruvate from D-glyceraldehyde 3-phosphate: step 1/5. This Caenorhabditis elegans protein is Glyceraldehyde-3-phosphate dehydrogenase 2 (gpd-2).